The following is a 595-amino-acid chain: Putative histone-lysine N-methyltransferase PRDM6 (595 aa).

Residues 27-90 (FPHGGAGPLK…STPASSSTSA (64 aa)) are disordered. Residues 30–40 (GGAGPLKGSGA) show a composition bias toward gly residues. The span at 49–59 (PLQPPPPPPPP) shows a compositional bias: pro residues. Low complexity predominate over residues 71–90 (PRPASLSSASSTPASSSTSA). An SET domain is found at 246-365 (REVCLCTSTV…RGTELLVWYN (120 aa)). A C2H2-type 1; degenerate zinc finger spans residues 473–495 (WKCGQCFKTFTQRILLQMHVCTQ). C2H2-type zinc fingers lie at residues 501–523 (YQCGHCSQSFSQPSELRNHVVTH) and 529–551 (FKCGYCGRAFAGATTLNNHIRTH). Residues 557-579 (FKCERCERSFTQATQLSRHQRMP) form a C2H2-type 4; degenerate zinc finger.

Belongs to the class V-like SAM-binding methyltransferase superfamily. As to quaternary structure, interacts with HDAC1, HDAC2, HDAC3, CBX1 and EP300.

The protein localises to the nucleus. The enzyme catalyses L-lysyl(20)-[histone H4] + S-adenosyl-L-methionine = N(6)-methyl-L-lysyl(20)-[histone H4] + S-adenosyl-L-homocysteine + H(+). Functionally, putative histone methyltransferase that acts as a transcriptional repressor of smooth muscle gene expression. Promotes the transition from differentiated to proliferative smooth muscle by suppressing differentiation and maintaining the proliferative potential of vascular smooth muscle cells. Also plays a role in endothelial cells by inhibiting endothelial cell proliferation, survival and differentiation. It is unclear whether it has histone methyltransferase activity in vivo. According to some authors, it does not act as a histone methyltransferase by itself and represses transcription by recruiting EHMT2/G9a. According to others, it possesses histone methyltransferase activity when associated with other proteins and specifically methylates 'Lys-20' of histone H4 in vitro. 'Lys-20' methylation represents a specific tag for epigenetic transcriptional repression. This Homo sapiens (Human) protein is Putative histone-lysine N-methyltransferase PRDM6 (PRDM6).